Consider the following 82-residue polypeptide: Omega-conotoxin PnVIB (82 aa).

An N-terminal signal peptide occupies residues 1 to 22 (MKLTCMMIVAVLFLTAWTVVTA). Positions 23–52 (EPHSSNVLENLYLKAHHEMENPEASKLNTR) are excised as a propeptide. 3 disulfide bridges follow: cysteine 56–cysteine 73, cysteine 63–cysteine 77, and cysteine 72–cysteine 81.

As to expression, expressed by the venom duct.

The protein resides in the secreted. In terms of biological role, omega-conotoxins act at presynaptic membranes, they bind and block voltage-gated calcium channels (Cav). Acts on high voltage-activated (HVA) calcium currents in molluscan neurons. The sequence is that of Omega-conotoxin PnVIB from Conus pennaceus (Feathered cone).